Here is a 276-residue protein sequence, read N- to C-terminus: Phospholipid phosphatase 2 (276 aa).

Topologically, residues 1-4 (MERR) are cytoplasmic. A helical membrane pass occupies residues 5 to 25 (WVFVLLDVLCVLVASLPFIIL). The Lumenal portion of the chain corresponds to 26–51 (TLVNAPYKRGFYCGDDSIRYPYRPDT). A helical membrane pass occupies residues 52-72 (ITHGLMAGVIITATVVLVSSG). Residues 73–87 (EAYLVYTDRLYSRSD) are Cytoplasmic-facing. A helical transmembrane segment spans residues 88-108 (FNNYVAAIYKVLGTFLFGAAV). Residues 109–161 (SQSLTDLAKYMIGRLRPSFLAVCDPDWSRVNCSGYVQVEVCRGSPANVTEARL) lie on the Lumenal side of the membrane. The phosphatase sequence motif I stretch occupies residues 117 to 125 (KYMIGRLRP). N-linked (GlcNAc...) asparagine glycosylation is found at Asn-139 and Asn-155. Residues 162 to 182 (SFYSGHSSFGMYCMLFLALYV) form a helical membrane-spanning segment. Positions 164 to 167 (YSGH) are phosphatase sequence motif II. His-167 (proton donors) is an active-site residue. The Cytoplasmic portion of the chain corresponds to 183-189 (QARLCWK). Residues 190–210 (WARLLRPTVQFFLVAFAIYVG) form a helical membrane-spanning segment. Residues 211 to 225 (YTRVSDNKHHWSDVL) are Lumenal-facing. The interval 212 to 223 (TRVSDNKHHWSD) is phosphatase sequence motif III. The Nucleophile role is filled by His-219. Residues 226 to 246 (VGLLQGALVACLTVCYVSDFF) traverse the membrane as a helical segment. The Cytoplasmic segment spans residues 247–276 (KSRPPQSCQENEESERKPSLSLTLTLGDRP). The disordered stretch occupies residues 252–276 (QSCQENEESERKPSLSLTLTLGDRP).

It belongs to the PA-phosphatase related phosphoesterase family. As to quaternary structure, forms functional homodimers and homooligomers. Can also form heterooligomers with PLPP1 and PLPP3. In terms of processing, N-glycosylated. Expressed in the brain.

The protein resides in the membrane. It localises to the cell membrane. The protein localises to the early endosome membrane. Its subcellular location is the endoplasmic reticulum membrane. The catalysed reaction is a 1,2-diacyl-sn-glycero-3-phosphate + H2O = a 1,2-diacyl-sn-glycerol + phosphate. The enzyme catalyses 1,2-dihexadecanoyl-sn-glycero-3-phosphate + H2O = 1,2-dihexadecanoyl-sn-glycerol + phosphate. It carries out the reaction 1,2-di-(9Z-octadecenoyl)-sn-glycero-3-phosphate + H2O = 1,2-di-(9Z-octadecenoyl)-sn-glycerol + phosphate. It catalyses the reaction a monoacyl-sn-glycero-3-phosphate + H2O = a monoacylglycerol + phosphate. The catalysed reaction is (9Z)-octadecenoyl-sn-glycero-3-phosphate + H2O = (9Z-octadecenoyl)-glycerol + phosphate. The enzyme catalyses sphing-4-enine 1-phosphate + H2O = sphing-4-enine + phosphate. It carries out the reaction an N-acylsphing-4-enine 1-phosphate + H2O = an N-acylsphing-4-enine + phosphate. It catalyses the reaction N-(octanoyl)-sphing-4-enine-1-phosphate + H2O = N-octanoylsphing-4-enine + phosphate. The catalysed reaction is N-(9Z-octadecenoyl)-ethanolamine phosphate + H2O = N-(9Z-octadecenoyl) ethanolamine + phosphate. It participates in lipid metabolism; phospholipid metabolism. Its activity is regulated as follows. Magnesium-independent phospholipid phosphatase. Insensitive to N-ethylmaleimide. In terms of biological role, magnesium-independent phospholipid phosphatase that catalyzes the dephosphorylation of a variety of glycerolipid and sphingolipid phosphate esters including phosphatidate/PA, lysophosphatidate/LPA, sphingosine 1-phosphate/S1P and ceramide 1-phosphate/C1P. Has no apparent extracellular phosphatase activity and therefore most probably acts intracellularly. Also acts on N-oleoyl ethanolamine phosphate/N-(9Z-octadecenoyl)-ethanolamine phosphate, a potential physiological compound. Through dephosphorylation of these bioactive lipid mediators produces new bioactive compounds and may regulate signal transduction in different cellular processes. Indirectly regulates, for instance, cell cycle G1/S phase transition through its phospholipid phosphatase activity. This chain is Phospholipid phosphatase 2, found in Rattus norvegicus (Rat).